The chain runs to 615 residues: Ankyrin repeat and LEM domain-containing protein 1 (615 aa).

ANK repeat units lie at residues D39–A71, E75–L104, and D108–T137. The segment at R138–P210 is disordered. The Nuclear export signal motif lies at L271–L280. Residues P283–S294 are compositionally biased toward polar residues. The tract at residues P283 to S315 is disordered. The LEM domain occupies H355 to P399. The 119-residue stretch at K448–Q566 folds into the GIY-YIG domain. The Nuclear localization signal motif lies at P579 to L586.

In terms of assembly, interacts (via LEM domain) with BANF1; the interaction may favor BANF1 dimerization. In terms of tissue distribution, expression is predominant in adult bone marrow.

Its subcellular location is the cytoplasm. It is found in the nucleus. Endonuclease that probably plays a role in the DNA damage response and DNA repair. In Homo sapiens (Human), this protein is Ankyrin repeat and LEM domain-containing protein 1 (ANKLE1).